Reading from the N-terminus, the 451-residue chain is Bifunctional protein GlmU (451 aa).

Residues 1–229 form a pyrophosphorylase region; that stretch reads MQRHAIVLAA…FEEIMGVNDR (229 aa). UDP-N-acetyl-alpha-D-glucosamine is bound by residues 8-11, K22, Q72, and 77-78; these read LAAG and GT. D102 is a Mg(2+) binding site. Residues G139, E154, and N227 each coordinate UDP-N-acetyl-alpha-D-glucosamine. N227 serves as a coordination point for Mg(2+). The interval 230–250 is linker; sequence VMLSEAEKAFRKRINEQHMKN. The N-acetyltransferase stretch occupies residues 251–451; the sequence is GVTIIDPVTT…QTTKEGYLKK (201 aa). UDP-N-acetyl-alpha-D-glucosamine contacts are provided by R332 and K350. H362 acts as the Proton acceptor in catalysis. Residues Y365 and N376 each contribute to the UDP-N-acetyl-alpha-D-glucosamine site. Acetyl-CoA contacts are provided by residues 385–386, A422, and R439; that span reads NY.

The protein in the N-terminal section; belongs to the N-acetylglucosamine-1-phosphate uridyltransferase family. It in the C-terminal section; belongs to the transferase hexapeptide repeat family. Homotrimer. The cofactor is Mg(2+).

It is found in the cytoplasm. The catalysed reaction is alpha-D-glucosamine 1-phosphate + acetyl-CoA = N-acetyl-alpha-D-glucosamine 1-phosphate + CoA + H(+). It carries out the reaction N-acetyl-alpha-D-glucosamine 1-phosphate + UTP + H(+) = UDP-N-acetyl-alpha-D-glucosamine + diphosphate. It functions in the pathway nucleotide-sugar biosynthesis; UDP-N-acetyl-alpha-D-glucosamine biosynthesis; N-acetyl-alpha-D-glucosamine 1-phosphate from alpha-D-glucosamine 6-phosphate (route II): step 2/2. The protein operates within nucleotide-sugar biosynthesis; UDP-N-acetyl-alpha-D-glucosamine biosynthesis; UDP-N-acetyl-alpha-D-glucosamine from N-acetyl-alpha-D-glucosamine 1-phosphate: step 1/1. Its pathway is bacterial outer membrane biogenesis; LPS lipid A biosynthesis. Catalyzes the last two sequential reactions in the de novo biosynthetic pathway for UDP-N-acetylglucosamine (UDP-GlcNAc). The C-terminal domain catalyzes the transfer of acetyl group from acetyl coenzyme A to glucosamine-1-phosphate (GlcN-1-P) to produce N-acetylglucosamine-1-phosphate (GlcNAc-1-P), which is converted into UDP-GlcNAc by the transfer of uridine 5-monophosphate (from uridine 5-triphosphate), a reaction catalyzed by the N-terminal domain. The sequence is that of Bifunctional protein GlmU from Staphylococcus saprophyticus subsp. saprophyticus (strain ATCC 15305 / DSM 20229 / NCIMB 8711 / NCTC 7292 / S-41).